The following is a 307-amino-acid chain: Putative F-box/LRR-repeat protein 22 (307 aa).

Residues 1-15 are compositionally biased toward polar residues; it reads MVTSSSSPPLATSQL. The disordered stretch occupies residues 1-26; it reads MVTSSSSPPLATSQLPVMKGEEKPSN. In terms of domain architecture, F-box spans 24–71; it reads PSNWAELPPDLLSSILLRLSPLEILENARKVCRSWRRVSKDPLIWRRI. LRR repeat units follow at residues 108-133, 158-183, 185-210, 212-237, and 244-270; these read WRFQ…RVKG, YCSI…KLVG, WSHL…HLQL, SNGL…DLRQ, and FGDL…DYNY. Residues 279 to 289 are compositionally biased toward acidic residues; it reads IEDEKGEEEEN. A disordered region spans residues 279 to 307; it reads IEDEKGEEEENYSYGSDDTEYGYRRSADF.

The chain is Putative F-box/LRR-repeat protein 22 (FBL22) from Arabidopsis thaliana (Mouse-ear cress).